The sequence spans 126 residues: Ribonuclease P protein component (126 aa).

The protein belongs to the RnpA family. In terms of assembly, consists of a catalytic RNA component (M1 or rnpB) and a protein subunit.

It catalyses the reaction Endonucleolytic cleavage of RNA, removing 5'-extranucleotides from tRNA precursor.. Its function is as follows. RNaseP catalyzes the removal of the 5'-leader sequence from pre-tRNA to produce the mature 5'-terminus. It can also cleave other RNA substrates such as 4.5S RNA. The protein component plays an auxiliary but essential role in vivo by binding to the 5'-leader sequence and broadening the substrate specificity of the ribozyme. The protein is Ribonuclease P protein component of Rhodococcus erythropolis (strain PR4 / NBRC 100887).